Consider the following 256-residue polypeptide: 5'-nucleotidase SurE (256 aa).

A divalent metal cation contacts are provided by D9, D10, S42, and N95.

It belongs to the SurE nucleotidase family. Requires a divalent metal cation as cofactor.

It localises to the cytoplasm. It catalyses the reaction a ribonucleoside 5'-phosphate + H2O = a ribonucleoside + phosphate. Functionally, nucleotidase that shows phosphatase activity on nucleoside 5'-monophosphates. In Campylobacter curvus (strain 525.92), this protein is 5'-nucleotidase SurE.